A 138-amino-acid chain; its full sequence is Large ribosomal subunit protein uL16 (138 aa).

Residues 1-13 (MLQPKRRKYRKEQ) are compositionally biased toward basic residues. The disordered stretch occupies residues 1–20 (MLQPKRRKYRKEQKGRNTGI).

Belongs to the universal ribosomal protein uL16 family. Part of the 50S ribosomal subunit.

In terms of biological role, binds 23S rRNA and is also seen to make contacts with the A and possibly P site tRNAs. This chain is Large ribosomal subunit protein uL16, found in Burkholderia mallei (strain NCTC 10247).